A 420-amino-acid polypeptide reads, in one-letter code: D-tagatose-1,6-bisphosphate aldolase subunit GatZ (420 aa).

The protein belongs to the GatZ/KbaZ family. GatZ subfamily. Forms a complex with GatY.

It functions in the pathway carbohydrate metabolism; D-tagatose 6-phosphate degradation; D-glyceraldehyde 3-phosphate and glycerone phosphate from D-tagatose 6-phosphate: step 2/2. In terms of biological role, component of the tagatose-1,6-bisphosphate aldolase GatYZ that is required for full activity and stability of the Y subunit. Could have a chaperone-like function for the proper and stable folding of GatY. When expressed alone, GatZ does not show any aldolase activity. Is involved in the catabolism of galactitol. This chain is D-tagatose-1,6-bisphosphate aldolase subunit GatZ, found in Escherichia coli O6:H1 (strain CFT073 / ATCC 700928 / UPEC).